The primary structure comprises 156 residues: ATP synthase subunit b (156 aa).

The chain crosses the membrane as a helical span at residues 7 to 27; that stretch reads LFAQLVVFFILAWFTMKFVWP.

Belongs to the ATPase B chain family. In terms of assembly, F-type ATPases have 2 components, F(1) - the catalytic core - and F(0) - the membrane proton channel. F(1) has five subunits: alpha(3), beta(3), gamma(1), delta(1), epsilon(1). F(0) has four main subunits: a(1), b(2) and c(10-14). The alpha and beta chains form an alternating ring which encloses part of the gamma chain. F(1) is attached to F(0) by a central stalk formed by the gamma and epsilon chains, while a peripheral stalk is formed by the delta and b chains.

The protein localises to the cell inner membrane. Its function is as follows. F(1)F(0) ATP synthase produces ATP from ADP in the presence of a proton or sodium gradient. F-type ATPases consist of two structural domains, F(1) containing the extramembraneous catalytic core and F(0) containing the membrane proton channel, linked together by a central stalk and a peripheral stalk. During catalysis, ATP synthesis in the catalytic domain of F(1) is coupled via a rotary mechanism of the central stalk subunits to proton translocation. Component of the F(0) channel, it forms part of the peripheral stalk, linking F(1) to F(0). The protein is ATP synthase subunit b of Methylibium petroleiphilum (strain ATCC BAA-1232 / LMG 22953 / PM1).